The chain runs to 414 residues: Serine--tRNA ligase (414 aa).

230–232 (TSE) provides a ligand contact to L-serine. Residue 261–263 (RQE) participates in ATP binding. Residue E284 coordinates L-serine. 348–351 (EISS) contributes to the ATP binding site. Position 382 (S382) interacts with L-serine.

Belongs to the class-II aminoacyl-tRNA synthetase family. Type-1 seryl-tRNA synthetase subfamily. In terms of assembly, homodimer. The tRNA molecule binds across the dimer.

The protein resides in the cytoplasm. The catalysed reaction is tRNA(Ser) + L-serine + ATP = L-seryl-tRNA(Ser) + AMP + diphosphate + H(+). It carries out the reaction tRNA(Sec) + L-serine + ATP = L-seryl-tRNA(Sec) + AMP + diphosphate + H(+). It participates in aminoacyl-tRNA biosynthesis; selenocysteinyl-tRNA(Sec) biosynthesis; L-seryl-tRNA(Sec) from L-serine and tRNA(Sec): step 1/1. In terms of biological role, catalyzes the attachment of serine to tRNA(Ser). Is also able to aminoacylate tRNA(Sec) with serine, to form the misacylated tRNA L-seryl-tRNA(Sec), which will be further converted into selenocysteinyl-tRNA(Sec). The protein is Serine--tRNA ligase of Campylobacter fetus subsp. fetus (strain 82-40).